Here is a 436-residue protein sequence, read N- to C-terminus: Serine--tRNA ligase (436 aa).

242–244 (TAE) provides a ligand contact to L-serine. Residue 273–275 (RSE) coordinates ATP. Residue E296 participates in L-serine binding. 360–363 (EISS) contacts ATP. S395 contributes to the L-serine binding site.

Belongs to the class-II aminoacyl-tRNA synthetase family. Type-1 seryl-tRNA synthetase subfamily. As to quaternary structure, homodimer. The tRNA molecule binds across the dimer.

Its subcellular location is the cytoplasm. It carries out the reaction tRNA(Ser) + L-serine + ATP = L-seryl-tRNA(Ser) + AMP + diphosphate + H(+). It catalyses the reaction tRNA(Sec) + L-serine + ATP = L-seryl-tRNA(Sec) + AMP + diphosphate + H(+). The protein operates within aminoacyl-tRNA biosynthesis; selenocysteinyl-tRNA(Sec) biosynthesis; L-seryl-tRNA(Sec) from L-serine and tRNA(Sec): step 1/1. Functionally, catalyzes the attachment of serine to tRNA(Ser). Is also able to aminoacylate tRNA(Sec) with serine, to form the misacylated tRNA L-seryl-tRNA(Sec), which will be further converted into selenocysteinyl-tRNA(Sec). The protein is Serine--tRNA ligase of Polynucleobacter necessarius subsp. necessarius (strain STIR1).